We begin with the raw amino-acid sequence, 138 residues long: Cysteine desulfuration protein SufE (138 aa).

The Cysteine persulfide intermediate role is filled by Cys-51.

This sequence belongs to the SufE family. As to quaternary structure, homodimer. Interacts with SufS.

The protein localises to the cytoplasm. It participates in cofactor biosynthesis; iron-sulfur cluster biosynthesis. Participates in cysteine desulfuration mediated by SufS. Cysteine desulfuration mobilizes sulfur from L-cysteine to yield L-alanine and constitutes an essential step in sulfur metabolism for biosynthesis of a variety of sulfur-containing biomolecules. Functions as a sulfur acceptor for SufS, by mediating the direct transfer of the sulfur atom from the S-sulfanylcysteine of SufS, an intermediate product of cysteine desulfuration process. This Escherichia coli O157:H7 protein is Cysteine desulfuration protein SufE.